The primary structure comprises 205 residues: Ribonuclease HII (205 aa).

The RNase H type-2 domain maps to 1 to 203 (MKAGIDEAGK…VSNLRQKTLD (203 aa)). Residues Asp-6 and Glu-7 each coordinate a divalent metal cation. A substrate-binding site is contributed by Arg-46. Asp-101 provides a ligand contact to a divalent metal cation. Lys-143, Arg-146, and Tyr-164 together coordinate substrate.

The protein belongs to the RNase HII family. Mn(2+) is required as a cofactor. The cofactor is Mg(2+).

The protein resides in the cytoplasm. It catalyses the reaction Endonucleolytic cleavage to 5'-phosphomonoester.. Functionally, endonuclease that specifically degrades the RNA of RNA-DNA hybrids. The polypeptide is Ribonuclease HII (rnhB) (Archaeoglobus fulgidus (strain ATCC 49558 / DSM 4304 / JCM 9628 / NBRC 100126 / VC-16)).